The primary structure comprises 177 residues: MIFFAETQTAGVPEIITSLFPNLPNFIAHVIATIVLVVILSKLMYKPFRKTIKDRRNKINELLSEAVQKQTEANIGVRKAEALLQDAKTESSLIIQTSKVDADIQKTHIISEAHKYADIIKNQAEKDIAQERSKIEAEIKTTIVNVAFDAAEQILQTEINKTKNKKIVDEFIENLDK.

Residues 19-39 (LFPNLPNFIAHVIATIVLVVI) form a helical membrane-spanning segment.

This sequence belongs to the ATPase B chain family. F-type ATPases have 2 components, F(1) - the catalytic core - and F(0) - the membrane proton channel. F(1) has five subunits: alpha(3), beta(3), gamma(1), delta(1), epsilon(1). F(0) has three main subunits: a(1), b(2) and c(10-14). The alpha and beta chains form an alternating ring which encloses part of the gamma chain. F(1) is attached to F(0) by a central stalk formed by the gamma and epsilon chains, while a peripheral stalk is formed by the delta and b chains.

It localises to the cell membrane. F(1)F(0) ATP synthase produces ATP from ADP in the presence of a proton or sodium gradient. F-type ATPases consist of two structural domains, F(1) containing the extramembraneous catalytic core and F(0) containing the membrane proton channel, linked together by a central stalk and a peripheral stalk. During catalysis, ATP synthesis in the catalytic domain of F(1) is coupled via a rotary mechanism of the central stalk subunits to proton translocation. Its function is as follows. Component of the F(0) channel, it forms part of the peripheral stalk, linking F(1) to F(0). This chain is ATP synthase subunit b, found in Mesoplasma florum (strain ATCC 33453 / NBRC 100688 / NCTC 11704 / L1) (Acholeplasma florum).